Here is a 511-residue protein sequence, read N- to C-terminus: Glucans biosynthesis protein G (511 aa).

Residues Met-1–Ala-22 form the signal peptide.

It belongs to the OpgD/OpgG family.

The protein resides in the periplasm. Its pathway is glycan metabolism; osmoregulated periplasmic glucan (OPG) biosynthesis. In terms of biological role, involved in the biosynthesis of osmoregulated periplasmic glucans (OPGs). The chain is Glucans biosynthesis protein G from Shigella dysenteriae serotype 1 (strain Sd197).